We begin with the raw amino-acid sequence, 350 residues long: Protein RecA (350 aa).

65–72 provides a ligand contact to ATP; the sequence is GPESSGKT. The disordered stretch occupies residues 329–350; it reads ASPDVKANPVKETEDDMADADI. Positions 341 to 350 are enriched in acidic residues; sequence TEDDMADADI.

Belongs to the RecA family.

The protein resides in the cytoplasm. In terms of biological role, can catalyze the hydrolysis of ATP in the presence of single-stranded DNA, the ATP-dependent uptake of single-stranded DNA by duplex DNA, and the ATP-dependent hybridization of homologous single-stranded DNAs. It interacts with LexA causing its activation and leading to its autocatalytic cleavage. This Pseudomonas fluorescens (strain ATCC BAA-477 / NRRL B-23932 / Pf-5) protein is Protein RecA.